A 111-amino-acid chain; its full sequence is Universal stress protein B (111 aa).

2 helical membrane-spanning segments follow: residues 1–21 and 90–110; these read MIST…NMAR and FILT…LAIW.

It belongs to the universal stress protein B family.

The protein localises to the cell inner membrane. The polypeptide is Universal stress protein B (Erwinia tasmaniensis (strain DSM 17950 / CFBP 7177 / CIP 109463 / NCPPB 4357 / Et1/99)).